Reading from the N-terminus, the 588-residue chain is Pectinesterase 4 (588 aa).

The signal sequence occupies residues 1 to 24 (MIGKVVVSVASILLIVGVAIGVVA). N-linked (GlcNAc...) asparagine glycans are attached at residues N86, N206, and N342. 2 residues coordinate substrate: T353 and Q383. D406 functions as the Proton donor in the catalytic mechanism. Catalysis depends on D427, which acts as the Nucleophile. Substrate is bound by residues R496 and W498.

In the N-terminal section; belongs to the PMEI family. It in the C-terminal section; belongs to the pectinesterase family. In terms of tissue distribution, expressed in pollen grains and pollen tubes.

It localises to the secreted. The protein localises to the cell wall. The enzyme catalyses [(1-&gt;4)-alpha-D-galacturonosyl methyl ester](n) + n H2O = [(1-&gt;4)-alpha-D-galacturonosyl](n) + n methanol + n H(+). It participates in glycan metabolism; pectin degradation; 2-dehydro-3-deoxy-D-gluconate from pectin: step 1/5. In terms of biological role, acts in the modification of cell walls via demethylesterification of cell wall pectin. Plays an important role in growth of pollen tubes in female floral tissues, possibly via enhancing the interaction between the pollen tube and female floral tissues by modification of the cell walls. This chain is Pectinesterase 4 (PME4), found in Arabidopsis thaliana (Mouse-ear cress).